Reading from the N-terminus, the 663-residue chain is MENATQPVPLIELRDIRKRYGGNGTPEVEVLKGVSLSIHAGEFVAIVGASGSGKSTLMNILGCLDRPSSGSYHFAGHDVAELDSDEQAWLRREAFGFVFQGYHLIPSASAQENVEMPAIYAGIPASERHTRARALLERLGLAERTANRPHQLSGGQQQRVSIARALMNGGHIILADEPTGALDSHSGAEVMALLDELASQGHVVILITHDRDVAARAKRIIEVRDGEIVSDSANDERPAHPSAGVERHLQADDLSQRLAEGSSEPSGAWRAELLEAVRAAWRVMWINRFRTALTLLGIIIGVASVVVMLAVGEGSKRQVMAQMGAFGSNIIYLSGYSPNPRAPMGIVSSDDVAAIATLPQVKKVMPVNGGELVVRYGNIDYHAYVGGNNTDFPEILNWPVAEGSYFTERDEDAATTVAVIGYKVRKKLFGSANPIGRYILIENVPFQVIGVLAEKGSSSGDKDADNRIAIPYSAASIRLFGTRNPEYVIIAAADAQRVHQAERAIDQLMLRLHRGQRDYELTNNAAMIQAEAKTQNTLSLMLGSIAAISLLVGGIGVMNIMLMTVRERTREIGIRMATGARQGDILRQFLTEAAMLSVVGGLAGIALALCIGGVLLLGQVAVAFSLSAIVGAFSCALVTGLVFGFMPARKAAQLDPVAALASQ.

In terms of domain architecture, ABC transporter spans 11 to 250 (IELRDIRKRY…PSAGVERHLQ (240 aa)). 48–55 (GASGSGKS) is an ATP binding site. 4 helical membrane-spanning segments follow: residues 292 to 312 (ALTL…LAVG), 545 to 565 (IAAI…LMTV), 598 to 618 (VVGG…LLLG), and 626 to 646 (LSAI…FGFM).

It belongs to the ABC transporter superfamily. Macrolide exporter (TC 3.A.1.122) family. As to quaternary structure, part of the tripartite efflux system PvdRT-OpmQ, which is composed of an inner membrane component with both ATPase and permease domains, PvdT, a periplasmic membrane fusion protein, PvdR, and an outer membrane component, OpmQ.

It localises to the cell inner membrane. Its function is as follows. Part of the tripartite efflux system PvdRT-OpmQ required for the secretion into the extracellular milieu of the siderophore pyoverdine (PVD), which is involved in iron acquisition. This subunit binds PVD and drives its secretion by hydrolyzing ATP. The system is responsible for export of newly synthesized PVD after the final steps of biosynthesis have taken place in the periplasm. It is also responsible for recycling of PVD after internalization of ferri-PVD into the periplasm by the outer-membrane receptor FpvA and release of iron from PVD, thus making PVD available for new cycles of iron uptake. In addition, can expel unwanted metals complexed with PVD from the periplasm into the extracellular medium. This chain is Pyoverdine export ATP-binding/permease protein PvdT, found in Pseudomonas aeruginosa (strain ATCC 15692 / DSM 22644 / CIP 104116 / JCM 14847 / LMG 12228 / 1C / PRS 101 / PAO1).